The following is a 493-amino-acid chain: Ribosomal protein uS12 methylthiotransferase RimO (493 aa).

The 117-residue stretch at R5 to N121 folds into the MTTase N-terminal domain. [4Fe-4S] cluster-binding residues include C14, C50, and C84. A disordered region spans residues L153–R177. Residues L179–R410 enclose the Radical SAM core domain. Residues C193, C197, and C200 each coordinate [4Fe-4S] cluster. The 71-residue stretch at D412–L482 folds into the TRAM domain.

This sequence belongs to the methylthiotransferase family. RimO subfamily. The cofactor is [4Fe-4S] cluster.

It is found in the cytoplasm. It catalyses the reaction L-aspartate(89)-[ribosomal protein uS12]-hydrogen + (sulfur carrier)-SH + AH2 + 2 S-adenosyl-L-methionine = 3-methylsulfanyl-L-aspartate(89)-[ribosomal protein uS12]-hydrogen + (sulfur carrier)-H + 5'-deoxyadenosine + L-methionine + A + S-adenosyl-L-homocysteine + 2 H(+). Its function is as follows. Catalyzes the methylthiolation of an aspartic acid residue of ribosomal protein uS12. This Streptomyces coelicolor (strain ATCC BAA-471 / A3(2) / M145) protein is Ribosomal protein uS12 methylthiotransferase RimO.